The primary structure comprises 951 residues: Cation channel sperm-associated auxiliary subunit epsilon (951 aa).

An N-terminal signal peptide occupies residues 1-19 (MSAREVAVLLLWLSCYGSA). At 20–903 (LWRYSTNSPN…ETFGLIPSPS (884 aa)) the chain is on the extracellular side. Intrachain disulfides connect Cys57/Cys71, Cys101/Cys206, Cys246/Cys336, and Cys410/Cys413. Residues Asn61 and Asn114 are each glycosylated (N-linked (GlcNAc...) asparagine). N-linked (GlcNAc...) asparagine glycans are attached at residues Asn414, Asn472, Asn487, Asn493, and Asn535. Disulfide bonds link Cys583–Cys690, Cys703–Cys885, Cys719–Cys752, and Cys804–Cys835. A glycan (N-linked (GlcNAc...) asparagine) is linked at Asn796. 3 N-linked (GlcNAc...) asparagine glycosylation sites follow: Asn854, Asn881, and Asn886. A helical transmembrane segment spans residues 904-924 (VYLVASFLFVLMLLFFTILVL). At 925–951 (SYFRYMRIYRRYIYEPLHKPQRKRKKN) the chain is on the cytoplasmic side.

Belongs to the CATSPERD family. In terms of assembly, component of the CatSper complex or CatSpermasome composed of the core pore-forming members CATSPER1, CATSPER2, CATSPER3 and CATSPER4 as well as auxiliary members CATSPERB, CATSPERG, CATSPERD, CATSPERE, CATSPERZ, C2CD6/CATSPERT, TMEM249, TMEM262 and EFCAB9. HSPA1 may be an additional auxiliary complex member. The core complex members CATSPER1, CATSPER2, CATSPER3 and CATSPER4 form a heterotetrameric channel. The auxiliary CATSPERB, CATSPERG, CATSPERD and CATSPERE subunits form a pavilion-like structure over the pore which stabilizes the complex through interactions with CATSPER4, CATSPER3, CATSPER1 and CATSPER2 respectively. TMEM262/CATSPERH interacts with CATSPERB, further stabilizing the complex. C2CD6/CATSPERT interacts at least with CATSPERD and is required for targeting the CatSper complex in the flagellar membrane.

The protein localises to the cell projection. It is found in the cilium. The protein resides in the flagellum membrane. Auxiliary component of the CatSper complex, a complex involved in sperm cell hyperactivation. Sperm cell hyperactivation is needed for sperm motility which is essential late in the preparation of sperm for fertilization. This Homo sapiens (Human) protein is Cation channel sperm-associated auxiliary subunit epsilon.